The primary structure comprises 504 residues: Probable cytochrome P450 6a21 (504 aa).

C449 contacts heme.

Belongs to the cytochrome P450 family. Heme is required as a cofactor.

The protein resides in the endoplasmic reticulum membrane. It is found in the microsome membrane. Functionally, may be involved in the metabolism of insect hormones and in the breakdown of synthetic insecticides. In Drosophila melanogaster (Fruit fly), this protein is Probable cytochrome P450 6a21 (Cyp6a21).